The sequence spans 331 residues: Cysteine and histidine-rich domain-containing protein 1 (331 aa).

At Ala-2 the chain carries N-acetylalanine. An interaction with PPP5C region spans residues 2-77; it reads ALLCYNRGCG…KPPEPVKPEV (76 aa). Zn(2+) is bound by residues Cys-5, Cys-10, Cys-24, His-27, Cys-42, and Cys-43. CHORD domains are found at residues 5 to 64 and 157 to 216; these read CYNR…KGRH and CKNG…RGKH. Thr-47 bears the Phosphothreonine mark. Ser-51 carries the post-translational modification Phosphoserine. The Zn(2+) site is built by Cys-59, His-64, Cys-157, Cys-162, Cys-176, His-179, Cys-194, Cys-195, Cys-211, and His-216. The segment at 62 to 82 is disordered; sequence GRHNSEKPPEPVKPEVKTTEK. Basic and acidic residues predominate over residues 64-82; the sequence is HNSEKPPEPVKPEVKTTEK. The segment at 65–316 is interaction with HSP90AA1 and HSP90AB1; it reads NSEKPPEPVK…AEPMQWASLE (252 aa). The CS domain maps to 227–316; sequence VVPCRHDWHQ…AEPMQWASLE (90 aa).

As to quaternary structure, interacts with HSP90AA1, HSP90AB1, PPP5C, ROCK1 and ROCK2.

Regulates centrosome duplication, probably by inhibiting the kinase activity of ROCK2. Proposed to act as co-chaperone for HSP90. May play a role in the regulation of NOD1 via a HSP90 chaperone complex. In vitro, has intrinsic chaperone activity. This function may be achieved by inhibiting association of ROCK2 with NPM1. Plays a role in ensuring the localization of the tyrosine kinase receptor EGFR to the plasma membrane, and thus ensures the subsequent regulation of EGFR activity and EGF-induced actin cytoskeleton remodeling. Involved in stress response. Prevents tumorigenesis. The polypeptide is Cysteine and histidine-rich domain-containing protein 1 (Chordc1) (Rattus norvegicus (Rat)).